An 86-amino-acid chain; its full sequence is MASSKAAINLQDIFLNQVRKEHVPVTVYLINGFQLKGLVKGFDNFTVVLESENKQQLLIYKHAISTITPQKPVIFSASDKDEKREE.

A Sm domain is found at 12-73 (DIFLNQVRKE…ISTITPQKPV (62 aa)).

Belongs to the Hfq family. As to quaternary structure, homohexamer.

RNA chaperone that binds small regulatory RNA (sRNAs) and mRNAs to facilitate mRNA translational regulation in response to envelope stress, environmental stress and changes in metabolite concentrations. Also binds with high specificity to tRNAs. The polypeptide is RNA-binding protein Hfq (Thermoanaerobacter pseudethanolicus (strain ATCC 33223 / 39E) (Clostridium thermohydrosulfuricum)).